We begin with the raw amino-acid sequence, 306 residues long: WUSCHEL-related homeobox 13 (306 aa).

Pro residues predominate over residues 1–11 (MMALGVPPPPS). Disordered regions lie at residues 1-20 (MMALGVPPPPSRAYVSGPLR), 103-142 (PRSHGHRTGGGGFSLKSSPFSSVGEERVPDPKPRRNPRPE), and 190-276 (SRSK…ARAT). The span at 126 to 142 (GEERVPDPKPRRNPRPE) shows a compositional bias: basic and acidic residues. The homeobox; WUS-type DNA-binding region spans 132 to 196 (DPKPRRNPRP…NRKSRSKNKL (65 aa)). The segment covering 199–210 (GGTGRAGLGLGG) has biased composition (gly residues). A compositionally biased stretch (pro residues) spans 231–242 (FTPPPILPPQPV). Residues 243-270 (QPQQQLVSPVAAPTSLSSSSSDRSSGSS) show a composition bias toward low complexity.

This sequence belongs to the WUS homeobox family.

It is found in the nucleus. Transcription factor which may be involved in developmental processes. This chain is WUSCHEL-related homeobox 13 (WOX13), found in Oryza sativa subsp. japonica (Rice).